The sequence spans 49 residues: Sperm protamine P1 (49 aa).

The disordered stretch occupies residues 1–49 (MARYRCCRSHSRSRCRRRRRRSRRRRRRSCGRRRRAGYRRYTVRYRRRR).

Belongs to the protamine P1 family. In terms of tissue distribution, testis.

It localises to the nucleus. The protein localises to the chromosome. In terms of biological role, protamines substitute for histones in the chromatin of sperm during the haploid phase of spermatogenesis. They compact sperm DNA into a highly condensed, stable and inactive complex. This chain is Sperm protamine P1 (PRM1), found in Macronycteris commersonii (Commerson's roundleaf bat).